The following is a 112-amino-acid chain: Large ribosomal subunit protein uL22 (112 aa).

This sequence belongs to the universal ribosomal protein uL22 family. Part of the 50S ribosomal subunit.

Its function is as follows. This protein binds specifically to 23S rRNA; its binding is stimulated by other ribosomal proteins, e.g. L4, L17, and L20. It is important during the early stages of 50S assembly. It makes multiple contacts with different domains of the 23S rRNA in the assembled 50S subunit and ribosome. The globular domain of the protein is located near the polypeptide exit tunnel on the outside of the subunit, while an extended beta-hairpin is found that lines the wall of the exit tunnel in the center of the 70S ribosome. In Desulfovibrio desulfuricans (strain ATCC 27774 / DSM 6949 / MB), this protein is Large ribosomal subunit protein uL22.